A 183-amino-acid chain; its full sequence is Probable GTP-binding protein EngB (183 aa).

One can recognise an EngB-type G domain in the interval 17 to 183 (DYPEVVFVGR…KKELLSRILN (167 aa)). GTP contacts are provided by residues 25–32 (GRSNVGKS), 51–55 (GRTRA), 69–72 (DVPG), 137–140 (TKID), and 166–168 (SSA). Ser-32 and Thr-53 together coordinate Mg(2+).

The protein belongs to the TRAFAC class TrmE-Era-EngA-EngB-Septin-like GTPase superfamily. EngB GTPase family. It depends on Mg(2+) as a cofactor.

Necessary for normal cell division and for the maintenance of normal septation. In Aquifex aeolicus (strain VF5), this protein is Probable GTP-binding protein EngB.